Reading from the N-terminus, the 294-residue chain is N-acetylmuramic acid 6-phosphate etherase (294 aa).

Residues 54 to 217 enclose the SIS domain; sequence VIQSFEEEGR…STASMIGVGK (164 aa). Glu82 (proton donor) is an active-site residue. Residue Glu113 is part of the active site.

It belongs to the GCKR-like family. MurNAc-6-P etherase subfamily. As to quaternary structure, homodimer.

The catalysed reaction is N-acetyl-D-muramate 6-phosphate + H2O = N-acetyl-D-glucosamine 6-phosphate + (R)-lactate. It participates in amino-sugar metabolism; N-acetylmuramate degradation. Functionally, specifically catalyzes the cleavage of the D-lactyl ether substituent of MurNAc 6-phosphate, producing GlcNAc 6-phosphate and D-lactate. The polypeptide is N-acetylmuramic acid 6-phosphate etherase (Bacillus thuringiensis subsp. konkukian (strain 97-27)).